The primary structure comprises 348 residues: 4-hydroxy-2-oxovalerate aldolase (348 aa).

A Pyruvate carboxyltransferase domain is found at 9–261 (ITVHDMTLRD…RTGVDVWKIQ (253 aa)). Substrate is bound at residue 17 to 18 (RD). Mn(2+) is bound at residue aspartate 18. The Proton acceptor role is filled by histidine 21. Residues serine 171 and histidine 200 each contribute to the substrate site. Mn(2+)-binding residues include histidine 200 and histidine 202. Tyrosine 291 is a substrate binding site.

Belongs to the 4-hydroxy-2-oxovalerate aldolase family.

The catalysed reaction is (S)-4-hydroxy-2-oxopentanoate = acetaldehyde + pyruvate. The polypeptide is 4-hydroxy-2-oxovalerate aldolase (Ralstonia pickettii (strain 12J)).